Here is a 202-residue protein sequence, read N- to C-terminus: Small ribosomal subunit protein uS5 (202 aa).

The region spanning 50-113 is the S5 DRBM domain; it reads LKQEILNINV…REAKLNLTPV (64 aa).

The protein belongs to the universal ribosomal protein uS5 family. As to quaternary structure, part of the 30S ribosomal subunit. Contacts protein S4.

In terms of biological role, with S4 and S12 plays an important role in translational accuracy. This chain is Small ribosomal subunit protein uS5, found in Pyrobaculum islandicum (strain DSM 4184 / JCM 9189 / GEO3).